The sequence spans 380 residues: Erythronate-4-phosphate dehydrogenase (380 aa).

Ser45 and Thr66 together coordinate substrate. NAD(+) is bound by residues 126 to 127 (QV), Asp146, Thr174, 205 to 207 (ASR), and Asp231. Residue Arg207 is part of the active site. Residue Glu236 is part of the active site. The active-site Proton donor is His253. Gly256 contacts NAD(+). A substrate-binding site is contributed by Tyr257.

This sequence belongs to the D-isomer specific 2-hydroxyacid dehydrogenase family. PdxB subfamily. Homodimer.

It is found in the cytoplasm. It catalyses the reaction 4-phospho-D-erythronate + NAD(+) = (R)-3-hydroxy-2-oxo-4-phosphooxybutanoate + NADH + H(+). It participates in cofactor biosynthesis; pyridoxine 5'-phosphate biosynthesis; pyridoxine 5'-phosphate from D-erythrose 4-phosphate: step 2/5. Its function is as follows. Catalyzes the oxidation of erythronate-4-phosphate to 3-hydroxy-2-oxo-4-phosphonooxybutanoate. The protein is Erythronate-4-phosphate dehydrogenase of Pseudomonas syringae pv. tomato (strain ATCC BAA-871 / DC3000).